The chain runs to 287 residues: Large ribosomal subunit protein uL2 (287 aa).

Residues 221–287 form a disordered region; the sequence is RGSVMNPCDH…SKRSRGGRDS (67 aa). The span at 258–287 shows a compositional bias: basic residues; sequence KTRKRNKPSNRFVLRKRRRVSKRSRGGRDS.

This sequence belongs to the universal ribosomal protein uL2 family. As to quaternary structure, part of the 50S ribosomal subunit. Forms a bridge to the 30S subunit in the 70S ribosome.

One of the primary rRNA binding proteins. Required for association of the 30S and 50S subunits to form the 70S ribosome, for tRNA binding and peptide bond formation. It has been suggested to have peptidyltransferase activity; this is somewhat controversial. Makes several contacts with the 16S rRNA in the 70S ribosome. The chain is Large ribosomal subunit protein uL2 from Prochlorococcus marinus (strain SARG / CCMP1375 / SS120).